Consider the following 201-residue polypeptide: Large ribosomal subunit protein bL12m (201 aa).

A mitochondrion-targeting transit peptide spans Met1 to Leu38. Disordered stretches follow at residues Gln37 to Glu60 and Val109 to Arg130. 4 positions are modified to N6-acetyllysine: Lys128, Lys141, Lys145, and Lys147. N6-acetyllysine; alternate is present on Lys153. Lys153 is subject to N6-succinyllysine; alternate. A Glycyl lysine isopeptide (Lys-Gly) (interchain with G-Cter in ubiquitin) cross-link involves residue Lys153. At Lys165 the chain carries N6-succinyllysine. Lys166 and Lys176 each carry N6-acetyllysine. Lys181 carries the post-translational modification N6-acetyllysine; alternate. Position 181 is an N6-succinyllysine; alternate (Lys181). The residue at position 188 (Lys188) is an N6-acetyllysine.

This sequence belongs to the bacterial ribosomal protein bL12 family. In terms of assembly, component of the mitochondrial ribosome large subunit (39S) which comprises a 16S rRNA and about 50 distinct proteins. Interacts with NOA1. Post-translationally, two mature forms are produced by differential two-step proteolytic cleavage. Cleaved by the mitochondrial processing protease to produce the long mature form and subsequently by the mitochondrial intermediate protease to produce the short mature form. In terms of processing, in the presence of CUL3, undergoes 'Lys-63'-linked ubiquitination at Lys-153 which results in proteasomal degradation.

It is found in the mitochondrion matrix. In terms of biological role, as a component of the mitochondrial large ribosomal subunit, plays a role in mitochondrial translation. When present in mitochondria as a free protein not associated with the ribosome, associates with mitochondrial RNA polymerase POLRMT to activate transcription. Required for POLRMT stability. The chain is Large ribosomal subunit protein bL12m (Mrpl12) from Mus musculus (Mouse).